The sequence spans 300 residues: Acetylglutamate kinase (300 aa).

Substrate-binding positions include 67-68, arginine 89, and asparagine 194; that span reads GG.

The protein belongs to the acetylglutamate kinase family. ArgB subfamily.

The protein resides in the cytoplasm. It carries out the reaction N-acetyl-L-glutamate + ATP = N-acetyl-L-glutamyl 5-phosphate + ADP. Its pathway is amino-acid biosynthesis; L-arginine biosynthesis; N(2)-acetyl-L-ornithine from L-glutamate: step 2/4. In terms of biological role, catalyzes the ATP-dependent phosphorylation of N-acetyl-L-glutamate. The protein is Acetylglutamate kinase of Saccharophagus degradans (strain 2-40 / ATCC 43961 / DSM 17024).